Here is a 226-residue protein sequence, read N- to C-terminus: Gap junction beta-2 protein (226 aa).

An intramembrane segment occupies 2–13 (DWSALQTILGGV). At 14–20 (NKHSTSI) the chain is on the cytoplasmic side. Residues 21 to 40 (GKIWLTVLFIFRIMILVVAA) form a helical membrane-spanning segment. The Extracellular segment spans residues 41 to 73 (KEVWGDEQADFVCNTLQPGCKNVCYDHYFPISH). Ca(2+) contacts are provided by Glu-42, Gly-45, and Glu-47. 3 disulfide bridges follow: Cys-53-Cys-180, Cys-60-Cys-174, and Cys-64-Cys-169. Residues 74-94 (IRLWALQLIFVSTPALLVAMH) form a helical membrane-spanning segment. Over 95–135 (VAYYRHEKKRKFIRGEIKTEFKDIEEIKNQKVRIEGSLWWT) the chain is Cytoplasmic. Residues 136–156 (YTGSIFFRVIFEAAFMYVFYV) form a helical membrane-spanning segment. Topologically, residues 157-189 (MYDGFAMQRLVKCNAWPCPNTVDCFVSRPTEKT) are extracellular. A helical membrane pass occupies residues 190–210 (VFTVFMIAVSGICILLNVTEL). Over 211-226 (CYLLIRFCSGKSKKPV) the chain is Cytoplasmic.

This sequence belongs to the connexin family. Beta-type (group I) subfamily. A hemichannel or connexon is composed of a hexamer of connexins. A functional gap junction is formed by the apposition of two hemichannels. Forms heteromeric channels with GJB4. Interacts with CNST.

The protein resides in the cell membrane. The protein localises to the cell junction. Its subcellular location is the gap junction. Functionally, structural component of gap junctions. Gap junctions are dodecameric channels that connect the cytoplasm of adjoining cells. They are formed by the docking of two hexameric hemichannels, one from each cell membrane. Small molecules and ions diffuse from one cell to a neighboring cell via the central pore. The sequence is that of Gap junction beta-2 protein (GJB2) from Ovis aries (Sheep).